A 274-amino-acid chain; its full sequence is Undecaprenyl-diphosphatase 2 (274 aa).

Helical transmembrane passes span 47–64 (VFVI…CWEY), 82–102 (WKFV…GLTF), 110–130 (LFSP…ILWA), 185–205 (ATEF…LYDL), 219–239 (LMAV…RGLI), and 249–269 (VFAW…WSGL).

Belongs to the UppP family.

It localises to the cell inner membrane. It carries out the reaction di-trans,octa-cis-undecaprenyl diphosphate + H2O = di-trans,octa-cis-undecaprenyl phosphate + phosphate + H(+). Functionally, catalyzes the dephosphorylation of undecaprenyl diphosphate (UPP). Confers resistance to bacitracin. The polypeptide is Undecaprenyl-diphosphatase 2 (Rhodospirillum rubrum (strain ATCC 11170 / ATH 1.1.1 / DSM 467 / LMG 4362 / NCIMB 8255 / S1)).